The following is a 391-amino-acid chain: Glutamate 5-kinase (391 aa).

Lys17 lines the ATP pocket. Substrate-binding residues include Ser57, Asp144, and Asn156. ATP-binding positions include 176–177 (SD) and 216–222 (TGGMTTK). In terms of domain architecture, PUA spans 278-356 (QGQIVIDDGA…AWLAAEMGPA (79 aa)). Residues 370–391 (SRRRKAEPSSRNQKSSGSRVTS) form a disordered region. The span at 378 to 391 (SSRNQKSSGSRVTS) shows a compositional bias: polar residues.

Belongs to the glutamate 5-kinase family.

It localises to the cytoplasm. The catalysed reaction is L-glutamate + ATP = L-glutamyl 5-phosphate + ADP. Its pathway is amino-acid biosynthesis; L-proline biosynthesis; L-glutamate 5-semialdehyde from L-glutamate: step 1/2. Functionally, catalyzes the transfer of a phosphate group to glutamate to form L-glutamate 5-phosphate. The polypeptide is Glutamate 5-kinase (Cutibacterium acnes (strain DSM 16379 / KPA171202) (Propionibacterium acnes)).